The following is a 999-amino-acid chain: Receptor-like protein kinase 5 (999 aa).

The N-terminal stretch at 1–14 (MLYCLILLLCLSST) is a signal peptide. Residues 15–621 (YLPSLSLNQD…LCRKITRSKN (607 aa)) are Extracellular-facing. LRR repeat units lie at residues 90-112 (SLHS…DFDT), 115-137 (NLIS…LPFN), 140-161 (NLKF…SFGE), 164-186 (KLES…LGNV), and 188-208 (TLKE…PSQL). N-linked (GlcNAc...) asparagine glycans are attached at residues Asn98 and Asn102. N-linked (GlcNAc...) asparagine glycans are attached at residues Asn150 and Asn185. Asn210 carries an N-linked (GlcNAc...) asparagine glycan. LRR repeat units lie at residues 213–236 (ELQV…SRLT) and 237–259 (SLVN…ITQL). 2 N-linked (GlcNAc...) asparagine glycosylation sites follow: Asn269 and Asn282. LRR repeat units lie at residues 285-307 (TLKR…LNLL), 308-330 (NLES…ITRS), 332-353 (TLSE…QLGA), 356-378 (PLQY…VCGE), 380-402 (KLEY…LGKC), 404-427 (SLTR…WGLP), 428-450 (RLSL…IIGA), 452-474 (NLSN…IGSL), 500-523 (QLSR…RGWK), 524-546 (NLNE…VGIL), 548-569 (VLNY…ELQN), and 571-593 (KLNV…YANK). N-linked (GlcNAc...) asparagine glycosylation is present at Asn452. Asn576 carries N-linked (GlcNAc...) asparagine glycosylation. The chain crosses the membrane as a helical span at residues 622 to 641 (IGYVWILLTIFLLAGLVFVV). Residues 642–999 (GIVMFIAKCR…PYYTEDLNSV (358 aa)) lie on the Cytoplasmic side of the membrane. Residues 683–968 (LDEKNVIGFG…KVVIMLQEVS (286 aa)) form the Protein kinase domain. ATP contacts are provided by residues 689–697 (IGFGSSGKV) and Lys711. Tyr766 and Tyr806 each carry phosphotyrosine. The Proton acceptor role is filled by Asp819. The residue at position 856 (Ser856) is a Phosphoserine. 2 positions are modified to phosphotyrosine: Tyr864 and Tyr871. Thr872 carries the post-translational modification Phosphothreonine. The tract at residues 972–999 (PCSSPNTSKRSKTGGKLSPYYTEDLNSV) is disordered.

Belongs to the protein kinase superfamily. Ser/Thr protein kinase family. As to quaternary structure, interacts with CST. Binds to IDA. Mg(2+) is required as a cofactor. Requires Mn(2+) as cofactor. Post-translationally, autophosphorylated on Ser, Thr and Tyr residues. In terms of tissue distribution, expressed in roots and rosettes. Expressed at the base of petioles and pedicels, and in the abscission zones of the floral organs.

The protein localises to the cell membrane. It catalyses the reaction L-seryl-[protein] + ATP = O-phospho-L-seryl-[protein] + ADP + H(+). It carries out the reaction L-threonyl-[protein] + ATP = O-phospho-L-threonyl-[protein] + ADP + H(+). The enzyme catalyses L-tyrosyl-[protein] + ATP = O-phospho-L-tyrosyl-[protein] + ADP + H(+). Receptor with a dual specificity kinase activity acting on both serine/threonine- and tyrosine-containing substrates that controls floral organ abscission. May interact with the 'INFLORESCENCE DEFICIENT IN ABSCISSION' (IDA) ligands family. This is Receptor-like protein kinase 5 (RLK5) from Arabidopsis thaliana (Mouse-ear cress).